The following is a 280-amino-acid chain: 4-deoxy-L-threo-5-hexosulose-uronate ketol-isomerase 1 (280 aa).

His198, His200, Glu205, and His247 together coordinate Zn(2+).

Belongs to the KduI family. The cofactor is Zn(2+).

It catalyses the reaction 5-dehydro-4-deoxy-D-glucuronate = 3-deoxy-D-glycero-2,5-hexodiulosonate. It participates in glycan metabolism; pectin degradation; 2-dehydro-3-deoxy-D-gluconate from pectin: step 4/5. Functionally, catalyzes the isomerization of 5-dehydro-4-deoxy-D-glucuronate to 3-deoxy-D-glycero-2,5-hexodiulosonate. The protein is 4-deoxy-L-threo-5-hexosulose-uronate ketol-isomerase 1 (kduI1) of Rhizobium meliloti (strain 1021) (Ensifer meliloti).